Here is a 317-residue protein sequence, read N- to C-terminus: Glycine--tRNA ligase alpha subunit (317 aa).

It belongs to the class-II aminoacyl-tRNA synthetase family. Tetramer of two alpha and two beta subunits.

It is found in the cytoplasm. It carries out the reaction tRNA(Gly) + glycine + ATP = glycyl-tRNA(Gly) + AMP + diphosphate. In Lactococcus lactis subsp. cremoris (strain SK11), this protein is Glycine--tRNA ligase alpha subunit.